Consider the following 273-residue polypeptide: MSNAPLANQSLQDFVARHQRLFVLTGAGCSTNSGIPDYRDSHGNWKRTQPVNFQAFMSEEHTRRRYWARSLIGWRRFGQARPNDAHHALARLEANGRCGMLLTQNVDRLHQSAGHRQVIDLHGRLDLVRCMGCGAKTPRSEFQDTLGRANAEWLALDASDAPDGDADLEHADFSSFKVPACEACGGILKPDVVFFGENVPRDVVATAQDHLSQADAMLIVGSSLMVYSGFRFVQAAAQRQIPIAAVNLGRTRADDLLTLKVEERCEAALAFLL.

One can recognise a Deacetylase sirtuin-type domain in the interval 1 to 273 (MSNAPLANQS…RCEAALAFLL (273 aa)). NAD(+) is bound by residues 26–46 (GAGC…GNWK) and 104–107 (QNVD). The active-site Proton acceptor is the H122. Positions 130, 133, 181, and 184 each coordinate Zn(2+). Residues 221-223 (GSS), 247-249 (NLG), and C265 contribute to the NAD(+) site.

This sequence belongs to the sirtuin family. Class II subfamily. Requires Zn(2+) as cofactor.

The protein resides in the cytoplasm. The catalysed reaction is N(6)-acetyl-L-lysyl-[protein] + NAD(+) + H2O = 2''-O-acetyl-ADP-D-ribose + nicotinamide + L-lysyl-[protein]. In terms of biological role, NAD-dependent protein deacetylase which modulates the activities of several enzymes which are inactive in their acetylated form. In Bradyrhizobium diazoefficiens (strain JCM 10833 / BCRC 13528 / IAM 13628 / NBRC 14792 / USDA 110), this protein is NAD-dependent protein deacetylase 2.